An 806-amino-acid chain; its full sequence is Mitogen-activated protein kinase 7 (806 aa).

Residues 1–23 (MAEPLKEEDGEDGSGEPPGRVKA) are disordered. N-acetylalanine is present on A2. Positions 2-77 (AEPLKEEDGE…VVSSARRRLT (76 aa)) are required for cytoplasmic targeting. A Protein kinase domain is found at 55–347 (YEIIETIGNG…AAAALRHPFL (293 aa)). Residues 61-69 (IGNGAYGVV) and K84 contribute to the ATP site. The required for binding to MAP2K5 stretch occupies residues 78–139 (GQQVAIKKIP…FRSVYVVLDL (62 aa)). Positions 140 to 406 (MESDLHQIIH…QQIRFQPSLQ (267 aa)) are necessary for oligomerization. The active-site Proton acceptor is the D182. The TXY motif lies at 219 to 221 (TEY). Positions 407–806 (PVASEPVCPD…LSDLPDLQEP (400 aa)) are may not be required for kinase activity; required to stimulate MEF2C activity. 2 disordered regions span residues 424-473 (APSG…AISD) and 488-727 (RSRL…PKGS). Residues 433-443 (SPPPALPPCSD) are compositionally biased toward pro residues. 3 stretches are compositionally biased toward basic and acidic residues: residues 502-519 (PEPR…EREE), 527-544 (RAKE…KERG), and 563-573 (DNDRSLLERWT). The Nuclear localization signal signature appears at 505-539 (RKPVTAQERQREREEKRRRRQERAKEREKRRQERE). Residues 578–592 (PPAPAPAPAPAPAPA) show a composition bias toward pro residues. Positions 593-603 (PSSAQPTSTPT) are enriched in low complexity. A compositionally biased stretch (pro residues) spans 627–643 (VCPPPGPVPQPAGPIPA). A compositionally biased stretch (polar residues) spans 647 to 660 (TAPSTSLLASQSLV). The segment covering 678–689 (PSGPPPPDPGLT) has biased composition (pro residues). The segment covering 693-710 (STSESPDVNLVTQQLSKS) has biased composition (polar residues). A Phosphoserine modification is found at S710. T723 is subject to Phosphothreonine.

Belongs to the protein kinase superfamily. CMGC Ser/Thr protein kinase family. MAP kinase subfamily. Interacts with MAP2K5. Forms oligomers. Interacts with MEF2A, MEF2C and MEF2D; the interaction phosphorylates the MEF2s and enhances transcriptional activity of MEF2A, MEF2C but not MEF2D. Interacts with SGK1. Interacts with PML. Interacts (via N-terminal half) with HSP90AB1-CDC37 chaperone complex in resting cells; the interaction is MAP2K5-independent and prevents MAPK7 from ubiquitination and proteasomal degradation. Interacts with STUB1/CHIP; the interaction is enhanced in the presence of IGF1 or MAP2K5 and promotes STUB1/CHIP E3 ligase activity. The cofactor is Mg(2+). In terms of processing, dually phosphorylated on Thr-219 and Tyr-221, which activates the enzyme. As to expression, detected in testis, brain, kidney, lung and heart. Detected in total embryo (at protein level).

Its subcellular location is the cytoplasm. The protein localises to the nucleus. It localises to the PML body. It catalyses the reaction L-seryl-[protein] + ATP = O-phospho-L-seryl-[protein] + ADP + H(+). It carries out the reaction L-threonyl-[protein] + ATP = O-phospho-L-threonyl-[protein] + ADP + H(+). With respect to regulation, activated by tyrosine and threonine phosphorylation. Activated in response to hyperosmolarity, hydrogen peroxide, and epidermal growth factor (EGF). Functionally, plays a role in various cellular processes such as proliferation, differentiation and cell survival. The upstream activator of MAPK7 is the MAPK kinase MAP2K5. Upon activation, it translocates to the nucleus and phosphorylates various downstream targets including MEF2C. EGF activates MAPK7 through a Ras-independent and MAP2K5-dependent pathway. As part of the MAPK/ERK signaling pathway, acts as a negative regulator of apoptosis in cardiomyocytes via interaction with STUB1/CHIP and promotion of STUB1-mediated ubiquitination and degradation of ICER-type isoforms of CREM. May have a role in muscle cell differentiation. May be important for endothelial function and maintenance of blood vessel integrity. MAP2K5 and MAPK7 interact specifically with one another and not with MEK1/ERK1 or MEK2/ERK2 pathways. Phosphorylates SGK1 at Ser-78 and this is required for growth factor-induced cell cycle progression. Involved in the regulation of p53/TP53 by disrupting the PML-MDM2 interaction. This Mus musculus (Mouse) protein is Mitogen-activated protein kinase 7 (Mapk7).